We begin with the raw amino-acid sequence, 600 residues long: Adenine deaminase 3 (600 aa).

Belongs to the metallo-dependent hydrolases superfamily. Adenine deaminase family. Mn(2+) serves as cofactor.

The catalysed reaction is adenine + H2O + H(+) = hypoxanthine + NH4(+). The sequence is that of Adenine deaminase 3 from Rhizobium johnstonii (strain DSM 114642 / LMG 32736 / 3841) (Rhizobium leguminosarum bv. viciae).